A 465-amino-acid chain; its full sequence is Dihydrolipoyllysine-residue acetyltransferase component 5 of pyruvate dehydrogenase complex, chloroplastic (465 aa).

The transit peptide at 1–31 (MSRLLQTPFLPSVSLPTKTRSSVTGFRVKPR) directs the protein to the chloroplast. The Lipoyl-binding domain maps to 39–114 (IREIFMPALS…PVGSAIALLA (76 aa)). Residue Lys-80 is modified to N6-lipoyllysine. The interval 123-148 (AKAKASGGGGGGDSKAPPASPPTAAV) is disordered. Residues 136-148 (SKAPPASPPTAAV) show a composition bias toward low complexity. Residues 184-221 (VASPYAKKLAKELKVELAGLVGSGPMGRIVAKDVEAVA) enclose the Peripheral subunit-binding (PSBD) domain. His-438 is an active-site residue.

This sequence belongs to the 2-oxoacid dehydrogenase family. (R)-lipoate serves as cofactor.

The protein resides in the plastid. Its subcellular location is the chloroplast stroma. It carries out the reaction N(6)-[(R)-dihydrolipoyl]-L-lysyl-[protein] + acetyl-CoA = N(6)-[(R)-S(8)-acetyldihydrolipoyl]-L-lysyl-[protein] + CoA. Its function is as follows. The pyruvate dehydrogenase complex catalyzes the overall conversion of pyruvate to acetyl-CoA and CO(2). It contains multiple copies of three enzymatic components: pyruvate dehydrogenase (E1), dihydrolipoamide acetyltransferase (E2) and lipoamide dehydrogenase (E3). The sequence is that of Dihydrolipoyllysine-residue acetyltransferase component 5 of pyruvate dehydrogenase complex, chloroplastic (EMB3003) from Arabidopsis thaliana (Mouse-ear cress).